The following is a 300-amino-acid chain: tRNA dimethylallyltransferase 1 (300 aa).

Residue 10–17 (GPTGVGKT) coordinates ATP. 12–17 (TGVGKT) lines the substrate pocket. The interaction with substrate tRNA stretch occupies residues 35-38 (DSRQ).

This sequence belongs to the IPP transferase family. In terms of assembly, monomer. Requires Mg(2+) as cofactor.

The catalysed reaction is adenosine(37) in tRNA + dimethylallyl diphosphate = N(6)-dimethylallyladenosine(37) in tRNA + diphosphate. In terms of biological role, catalyzes the transfer of a dimethylallyl group onto the adenine at position 37 in tRNAs that read codons beginning with uridine, leading to the formation of N6-(dimethylallyl)adenosine (i(6)A). The sequence is that of tRNA dimethylallyltransferase 1 from Phocaeicola vulgatus (strain ATCC 8482 / DSM 1447 / JCM 5826 / CCUG 4940 / NBRC 14291 / NCTC 11154) (Bacteroides vulgatus).